We begin with the raw amino-acid sequence, 149 residues long: Large ribosomal subunit protein uL22c (149 aa).

Belongs to the universal ribosomal protein uL22 family. Part of the 50S ribosomal subunit.

It is found in the plastid. It localises to the chloroplast. This protein binds specifically to 23S rRNA. In terms of biological role, the globular domain of the protein is located near the polypeptide exit tunnel on the outside of the subunit, while an extended beta-hairpin is found that lines the wall of the exit tunnel in the center of the 70S ribosome. The sequence is that of Large ribosomal subunit protein uL22c (rpl22) from Oryza nivara (Indian wild rice).